We begin with the raw amino-acid sequence, 282 residues long: Release factor glutamine methyltransferase (282 aa).

S-adenosyl-L-methionine contacts are provided by Asp-141, Phe-169, and Asn-186. 186–189 (NPPY) contacts substrate.

It belongs to the protein N5-glutamine methyltransferase family. PrmC subfamily.

It carries out the reaction L-glutaminyl-[peptide chain release factor] + S-adenosyl-L-methionine = N(5)-methyl-L-glutaminyl-[peptide chain release factor] + S-adenosyl-L-homocysteine + H(+). Its function is as follows. Methylates the class 1 translation termination release factors RF1/PrfA and RF2/PrfB on the glutamine residue of the universally conserved GGQ motif. The chain is Release factor glutamine methyltransferase from Mycoplasma mycoides subsp. mycoides SC (strain CCUG 32753 / NCTC 10114 / PG1).